A 334-amino-acid chain; its full sequence is Mitochondrial glycine transporter (334 aa).

3 Solcar repeats span residues 10–94 (SKSS…IRQA), 127–211 (LSNT…FKRR), and 234–318 (RAAA…LIMR). A run of 6 helical transmembrane segments spans residues 16-41 (FVAG…TRVQ), 69-95 (GTVP…RQAA), 133-158 (LLAG…VRYE), 186-209 (GFGA…EQFK), 238-264 (VNFS…KTRI), and 293-311 (GLGL…AWTL).

Belongs to the mitochondrial carrier (TC 2.A.29) family. SLC25A38 subfamily.

It is found in the mitochondrion inner membrane. It carries out the reaction glycine(in) = glycine(out). Mitochondrial glycine transporter that imports glycine into the mitochondrial matrix. Plays an important role in providing glycine for the first enzymatic step in heme biosynthesis, the condensation of glycine with succinyl-CoA to produce 5-aminolevulinate (ALA) in the mitochondrial matrix. This chain is Mitochondrial glycine transporter, found in Pyricularia oryzae (strain 70-15 / ATCC MYA-4617 / FGSC 8958) (Rice blast fungus).